A 499-amino-acid polypeptide reads, in one-letter code: uncharacterized protein (499 aa).

FAD-binding positions include 6–35 (EAVIIGGGPVGFMLASELAIAGVGTCVIER) and 272–282 (YRDGRIFLAGD).

The protein belongs to the PheA/TfdB FAD monooxygenase family. The cofactor is FAD.

This is an uncharacterized protein from Bacillus subtilis (strain 168).